Here is a 251-residue protein sequence, read N- to C-terminus: Imidazole glycerol phosphate synthase subunit HisF (251 aa).

Catalysis depends on residues D11 and D130.

The protein belongs to the HisA/HisF family. As to quaternary structure, heterodimer of HisH and HisF.

The protein localises to the cytoplasm. The catalysed reaction is 5-[(5-phospho-1-deoxy-D-ribulos-1-ylimino)methylamino]-1-(5-phospho-beta-D-ribosyl)imidazole-4-carboxamide + L-glutamine = D-erythro-1-(imidazol-4-yl)glycerol 3-phosphate + 5-amino-1-(5-phospho-beta-D-ribosyl)imidazole-4-carboxamide + L-glutamate + H(+). It participates in amino-acid biosynthesis; L-histidine biosynthesis; L-histidine from 5-phospho-alpha-D-ribose 1-diphosphate: step 5/9. Its function is as follows. IGPS catalyzes the conversion of PRFAR and glutamine to IGP, AICAR and glutamate. The HisF subunit catalyzes the cyclization activity that produces IGP and AICAR from PRFAR using the ammonia provided by the HisH subunit. This is Imidazole glycerol phosphate synthase subunit HisF from Pelodictyon phaeoclathratiforme (strain DSM 5477 / BU-1).